Here is a 138-residue protein sequence, read N- to C-terminus: Ribulose bisphosphate carboxylase small subunit (138 aa).

This sequence belongs to the RuBisCO small chain family. In terms of assembly, heterohexadecamer of 8 large and 8 small subunits.

It localises to the plastid. The protein resides in the chloroplast. In terms of biological role, ruBisCO catalyzes two reactions: the carboxylation of D-ribulose 1,5-bisphosphate, the primary event in carbon dioxide fixation, as well as the oxidative fragmentation of the pentose substrate in the photorespiration process. Both reactions occur simultaneously and in competition at the same active site. Although the small subunit is not catalytic it is essential for maximal activity. The polypeptide is Ribulose bisphosphate carboxylase small subunit (Porphyra purpurea (Red seaweed)).